The sequence spans 203 residues: Large ribosomal subunit protein bL25 (203 aa).

Belongs to the bacterial ribosomal protein bL25 family. CTC subfamily. Part of the 50S ribosomal subunit; part of the 5S rRNA/L5/L18/L25 subcomplex. Contacts the 5S rRNA. Binds to the 5S rRNA independently of L5 and L18.

Its function is as follows. This is one of the proteins that binds to the 5S RNA in the ribosome where it forms part of the central protuberance. The chain is Large ribosomal subunit protein bL25 from Pseudomonas savastanoi pv. phaseolicola (strain 1448A / Race 6) (Pseudomonas syringae pv. phaseolicola (strain 1448A / Race 6)).